The following is a 322-amino-acid chain: uncharacterized protein (322 aa).

Positions 1–17 are enriched in low complexity; it reads MASMAAAIAASRSAVMS. The tract at residues 1-22 is disordered; that stretch reads MASMAAAIAASRSAVMSGNRPL. N-acetylalanine is present on alanine 2. Serine 37 bears the Phosphoserine mark. Residues 81-104 are disordered; sequence AAAADAGDVRDPARFPGLRGPTGQ. Serine 130 carries the post-translational modification Phosphoserine. Polar residues-rich tracts occupy residues 142-153 and 161-177; these read QEPSAATVTSDA and QGTQ…SSSL. The disordered stretch occupies residues 142-301; the sequence is QEPSAATVTS…DDDALFSEPA (160 aa). Residue serine 176 is modified to Phosphoserine. Positions 183 to 203 are enriched in basic and acidic residues; it reads ARKEEEAPFWKINAERSREGP. Residues 245 to 255 show a composition bias toward polar residues; the sequence is QEQQTLPSVSA.

The protein localises to the cytoplasm. This is an uncharacterized protein from Mus musculus (Mouse).